The chain runs to 518 residues: Metalloprotease TIKI2 (518 aa).

An N-terminal signal peptide occupies residues 1–22 (MNCQSGLRWLVTLCAFFQVGSA). Topologically, residues 23 to 499 (RDTHESTRQC…SALDSAAPNP (477 aa)) are extracellular. 5 N-linked (GlcNAc...) asparagine glycosylation sites follow: Asn-224, Asn-233, Asn-282, Asn-325, and Asn-340. Residues 500 to 517 (TYALTCFLACLISQLLFA) form a helical membrane-spanning segment. Ser-518 is a topological domain (cytoplasmic).

This sequence belongs to the TIKI family. It depends on Mn(2+) as a cofactor. Co(2+) is required as a cofactor.

The protein resides in the cell membrane. Metalloprotease that acts as a negative regulator of the Wnt signaling pathway by mediating the cleavage of the N-terminal residues of a subset of Wnt proteins. Following cleavage, Wnt proteins become oxidized and form large disulfide-bond oligomers, leading to their inactivation. The chain is Metalloprotease TIKI2 (trabd2b) from Danio rerio (Zebrafish).